Consider the following 245-residue polypeptide: MASTALLALCSTGAFSGLAVEAGAGVCHATPIYAGHSWHQATFRLNVAGSTLSRYLRDLLVAANPDLLQQALPRKAITHLKKRSCYVSLDFEGDLRDPARHHPASFSVGNGCCVCLSSERFRCPEPIFQPGLLGQAEQGLPALAFRALQKMPKTLRTRLADTVVLAGGSTLFPGFAERLDKELEAQCRRHGYAALRPHLVAKHGRGMAVWTGGSMVASLHSFQRRWITRAMYQECGSRLLYDVFN.

The protein belongs to the actin family.

This chain is Actin-like protein 10 (ACTL10), found in Homo sapiens (Human).